A 127-amino-acid polypeptide reads, in one-letter code: Major sperm protein 38 (127 aa).

The residue at position 2 (A2) is an N-acetylalanine. One can recognise an MSP domain in the interval D9–N126.

Sperm.

The protein resides in the cell projection. The protein localises to the pseudopodium. It localises to the cytoplasm. It is found in the cytoskeleton. Its function is as follows. Central component in molecular interactions underlying sperm crawling. Forms an extensive filament system that extends from sperm villipoda, along the leading edge of the pseudopod. This Caenorhabditis elegans protein is Major sperm protein 38 (msp-38).